A 410-amino-acid polypeptide reads, in one-letter code: Chorismate synthase (410 aa).

The NADP(+) site is built by arginine 43 and arginine 49. FMN contacts are provided by residues 143–145 (RSS), 264–265 (QA), glycine 308, 323–327 (KPIST), and arginine 349.

It belongs to the chorismate synthase family. In terms of assembly, homotetramer. The cofactor is FMNH2.

The enzyme catalyses 5-O-(1-carboxyvinyl)-3-phosphoshikimate = chorismate + phosphate. It participates in metabolic intermediate biosynthesis; chorismate biosynthesis; chorismate from D-erythrose 4-phosphate and phosphoenolpyruvate: step 7/7. In terms of biological role, catalyzes the anti-1,4-elimination of the C-3 phosphate and the C-6 proR hydrogen from 5-enolpyruvylshikimate-3-phosphate (EPSP) to yield chorismate, which is the branch point compound that serves as the starting substrate for the three terminal pathways of aromatic amino acid biosynthesis. This reaction introduces a second double bond into the aromatic ring system. In Corynebacterium glutamicum (strain ATCC 13032 / DSM 20300 / JCM 1318 / BCRC 11384 / CCUG 27702 / LMG 3730 / NBRC 12168 / NCIMB 10025 / NRRL B-2784 / 534), this protein is Chorismate synthase.